Reading from the N-terminus, the 201-residue chain is 3-isopropylmalate dehydratase small subunit (201 aa).

Belongs to the LeuD family. LeuD type 1 subfamily. In terms of assembly, heterodimer of LeuC and LeuD.

It catalyses the reaction (2R,3S)-3-isopropylmalate = (2S)-2-isopropylmalate. It functions in the pathway amino-acid biosynthesis; L-leucine biosynthesis; L-leucine from 3-methyl-2-oxobutanoate: step 2/4. Catalyzes the isomerization between 2-isopropylmalate and 3-isopropylmalate, via the formation of 2-isopropylmaleate. The polypeptide is 3-isopropylmalate dehydratase small subunit (Shewanella denitrificans (strain OS217 / ATCC BAA-1090 / DSM 15013)).